Reading from the N-terminus, the 475-residue chain is Putative poly(A) polymerase catalytic subunit (475 aa).

This sequence belongs to the poxviridae poly(A) polymerase catalytic subunit family. Highly divergent.

The protein resides in the virion. The catalysed reaction is RNA(n) + ATP = RNA(n)-3'-adenine ribonucleotide + diphosphate. Functionally, polymerase that creates the 3'-poly(A) tail of mRNA's. This African swine fever virus (isolate Tick/South Africa/Pretoriuskop Pr4/1996) (ASFV) protein is Putative poly(A) polymerase catalytic subunit.